A 545-amino-acid polypeptide reads, in one-letter code: Probable bifunctional tRNA threonylcarbamoyladenosine biosynthesis protein (545 aa).

The tract at residues 1 to 329 is kae1; sequence MKNTFILGIE…YRTDDVKVTW (329 aa). Fe cation contacts are provided by histidine 113, histidine 117, and tyrosine 134. L-threonylcarbamoyladenylate-binding positions include 134–138, aspartate 166, glycine 179, glutamate 183, and asparagine 262; that span reads YVSGA. Position 290 (aspartate 290) interacts with Fe cation. Residues 340-545 form the Protein kinase domain; sequence EISPGTSLKL…EEIKKRARYA (206 aa). ATP contacts are provided by residues 353–361 and lysine 375; that span reads LDNGAEAIV. Aspartate 462 functions as the Proton acceptor; for kinase activity in the catalytic mechanism.

This sequence in the N-terminal section; belongs to the KAE1 / TsaD family. In the C-terminal section; belongs to the protein kinase superfamily. Tyr protein kinase family. BUD32 subfamily. Component of the KEOPS complex that consists of Kae1, Bud32, Cgi121 and Pcc1; the whole complex dimerizes. The cofactor is Fe(2+).

It localises to the cytoplasm. The enzyme catalyses L-seryl-[protein] + ATP = O-phospho-L-seryl-[protein] + ADP + H(+). It catalyses the reaction L-threonyl-[protein] + ATP = O-phospho-L-threonyl-[protein] + ADP + H(+). It carries out the reaction L-threonylcarbamoyladenylate + adenosine(37) in tRNA = N(6)-L-threonylcarbamoyladenosine(37) in tRNA + AMP + H(+). Its function is as follows. Required for the formation of a threonylcarbamoyl group on adenosine at position 37 (t(6)A37) in tRNAs that read codons beginning with adenine. Is a component of the KEOPS complex that is probably involved in the transfer of the threonylcarbamoyl moiety of threonylcarbamoyl-AMP (TC-AMP) to the N6 group of A37. The Kae1 domain likely plays a direct catalytic role in this reaction. The Bud32 domain probably displays kinase activity that regulates Kae1 function. The polypeptide is Probable bifunctional tRNA threonylcarbamoyladenosine biosynthesis protein (Methanosarcina barkeri (strain Fusaro / DSM 804)).